The chain runs to 317 residues: Aspartate carbamoyltransferase catalytic subunit (317 aa).

The carbamoyl phosphate site is built by R66 and T67. K94 provides a ligand contact to L-aspartate. Carbamoyl phosphate-binding residues include R116, H144, and Q147. Positions 177 and 231 each coordinate L-aspartate. Carbamoyl phosphate-binding residues include G272 and P273.

Belongs to the aspartate/ornithine carbamoyltransferase superfamily. ATCase family. Heterododecamer (2C3:3R2) of six catalytic PyrB chains organized as two trimers (C3), and six regulatory PyrI chains organized as three dimers (R2).

The enzyme catalyses carbamoyl phosphate + L-aspartate = N-carbamoyl-L-aspartate + phosphate + H(+). It functions in the pathway pyrimidine metabolism; UMP biosynthesis via de novo pathway; (S)-dihydroorotate from bicarbonate: step 2/3. Its function is as follows. Catalyzes the condensation of carbamoyl phosphate and aspartate to form carbamoyl aspartate and inorganic phosphate, the committed step in the de novo pyrimidine nucleotide biosynthesis pathway. The sequence is that of Aspartate carbamoyltransferase catalytic subunit from Rhodopseudomonas palustris (strain BisB5).